A 205-amino-acid chain; its full sequence is Guanylate kinase (205 aa).

The Guanylate kinase-like domain maps to 5 to 183 (GLLIVFSGPS…AAERVKKIIE (179 aa)). 12–19 (GPSGVGKG) contacts ATP.

This sequence belongs to the guanylate kinase family.

The protein localises to the cytoplasm. The catalysed reaction is GMP + ATP = GDP + ADP. Its function is as follows. Essential for recycling GMP and indirectly, cGMP. The sequence is that of Guanylate kinase (gmk) from Lactococcus lactis subsp. lactis (strain IL1403) (Streptococcus lactis).